A 145-amino-acid polypeptide reads, in one-letter code: Photosystem I reaction center subunit XI (145 aa).

3 helical membrane-spanning segments follow: residues 48–68 (LEIG…LGPL), 75–95 (LLVG…GLTI), and 125–145 (IGAF…SFFA).

Belongs to the PsaL family.

Its subcellular location is the plastid. It is found in the chloroplast thylakoid membrane. The sequence is that of Photosystem I reaction center subunit XI from Emiliania huxleyi (Coccolithophore).